The sequence spans 921 residues: Isoleucine--tRNA ligase (921 aa).

The 'HIGH' region signature appears at 57 to 67 (PYANGDIHMGH). Residue Glu552 participates in L-isoleucyl-5'-AMP binding. Positions 593 to 597 (KMSKS) match the 'KMSKS' region motif. Lys596 contributes to the ATP binding site. Zn(2+) is bound by residues Cys888, Cys891, Cys908, and Cys911.

It belongs to the class-I aminoacyl-tRNA synthetase family. IleS type 1 subfamily. Monomer. Zn(2+) serves as cofactor.

It is found in the cytoplasm. It carries out the reaction tRNA(Ile) + L-isoleucine + ATP = L-isoleucyl-tRNA(Ile) + AMP + diphosphate. Catalyzes the attachment of isoleucine to tRNA(Ile). As IleRS can inadvertently accommodate and process structurally similar amino acids such as valine, to avoid such errors it has two additional distinct tRNA(Ile)-dependent editing activities. One activity is designated as 'pretransfer' editing and involves the hydrolysis of activated Val-AMP. The other activity is designated 'posttransfer' editing and involves deacylation of mischarged Val-tRNA(Ile). This chain is Isoleucine--tRNA ligase, found in Bacillus cytotoxicus (strain DSM 22905 / CIP 110041 / 391-98 / NVH 391-98).